The primary structure comprises 359 residues: MSADGIKLLRTPGFDKSKWMQLPRDVVIGHNALDQFPAVCQDLKIGRSVMLFAGKSTMQVAGNRIEELLAPSFDISTFLARELTPESMKEGEEAACGVDLIIGVGGGRVIDTAKIVSFNLDLPFISVPTAASHDGIASGRASLQTSEGSASLTAHPPLGVVADTGIIAAAPHRLLAAGCADIISNYTAILDWELSNRLRGEPISEYAITLSRMTAEILMKNAPMIRPHQEESAWMVVKALVSSGVAMAIAGSSRPASGGEHKFSHALERLAPGKALHGEACGIGTIIMMYLHGGDWRGIRTALQQIGAPTTPAELGIPDEVAVAALMMAKTIRPERFSILDSGLTEESATALIRLLYGE.

NAD(+) contacts are provided by residues 107–111 (GRVID) and 129–132 (TAAS). Asp-134 provides a ligand contact to substrate. Residue Ser-138 participates in NAD(+) binding. Asp-181 contributes to the substrate binding site. 2 residues coordinate Zn(2+): Asp-181 and His-261. Residue His-265 participates in substrate binding. His-277 contributes to the Zn(2+) binding site.

The protein belongs to the glycerol-1-phosphate dehydrogenase family. It depends on Zn(2+) as a cofactor.

It localises to the cytoplasm. The catalysed reaction is sn-glycerol 1-phosphate + NAD(+) = dihydroxyacetone phosphate + NADH + H(+). It carries out the reaction sn-glycerol 1-phosphate + NADP(+) = dihydroxyacetone phosphate + NADPH + H(+). The protein operates within membrane lipid metabolism; glycerophospholipid metabolism. Its function is as follows. Catalyzes the NAD(P)H-dependent reduction of dihydroxyacetonephosphate (DHAP or glycerone phosphate) to glycerol 1-phosphate (G1P). The G1P thus generated is used as the glycerophosphate backbone of phospholipids in the cellular membranes of Archaea. This chain is Glycerol-1-phosphate dehydrogenase [NAD(P)+], found in Methanosphaerula palustris (strain ATCC BAA-1556 / DSM 19958 / E1-9c).